We begin with the raw amino-acid sequence, 352 residues long: Galactokinase (352 aa).

Residue 14 to 17 (EHTD) coordinates substrate. Residues Ser-46 and 96–102 (GAGLSSS) each bind ATP. Ser-102 and Glu-134 together coordinate Mg(2+). The active-site Proton acceptor is the Asp-146. Tyr-196 serves as a coordination point for substrate.

The protein belongs to the GHMP kinase family. GalK subfamily.

It is found in the cytoplasm. It catalyses the reaction alpha-D-galactose + ATP = alpha-D-galactose 1-phosphate + ADP + H(+). The protein operates within carbohydrate metabolism; galactose metabolism. Its function is as follows. Catalyzes the transfer of the gamma-phosphate of ATP to D-galactose to form alpha-D-galactose-1-phosphate (Gal-1-P). This Thermosipho africanus (strain TCF52B) protein is Galactokinase.